We begin with the raw amino-acid sequence, 397 residues long: Enoyl-[acyl-carrier-protein] reductase [NADH] (397 aa).

NAD(+)-binding positions include 48 to 53 (GASTGY), 74 to 75 (FE), 111 to 112 (DA), and 139 to 140 (VA). Tyr225 contributes to the substrate binding site. Residue Tyr235 is the Proton donor of the active site. Residues Lys244 and 273-275 (VVT) contribute to the NAD(+) site.

The protein belongs to the TER reductase family. In terms of assembly, monomer.

The enzyme catalyses a 2,3-saturated acyl-[ACP] + NAD(+) = a (2E)-enoyl-[ACP] + NADH + H(+). The protein operates within lipid metabolism; fatty acid biosynthesis. Its function is as follows. Involved in the final reduction of the elongation cycle of fatty acid synthesis (FAS II). Catalyzes the reduction of a carbon-carbon double bond in an enoyl moiety that is covalently linked to an acyl carrier protein (ACP). This is Enoyl-[acyl-carrier-protein] reductase [NADH] from Burkholderia pseudomallei (strain K96243).